Here is a 246-residue protein sequence, read N- to C-terminus: Orotidine 5'-phosphate decarboxylase (246 aa).

Substrate-binding positions include aspartate 22, lysine 44, 71 to 80 (DLKYHDIPHT), threonine 130, arginine 191, glutamine 201, glycine 221, and arginine 222. Lysine 73 (proton donor) is an active-site residue.

The protein belongs to the OMP decarboxylase family. Type 1 subfamily. As to quaternary structure, homodimer.

The enzyme catalyses orotidine 5'-phosphate + H(+) = UMP + CO2. It functions in the pathway pyrimidine metabolism; UMP biosynthesis via de novo pathway; UMP from orotate: step 2/2. In terms of biological role, catalyzes the decarboxylation of orotidine 5'-monophosphate (OMP) to uridine 5'-monophosphate (UMP). This Neisseria meningitidis serogroup B (strain ATCC BAA-335 / MC58) protein is Orotidine 5'-phosphate decarboxylase.